A 209-amino-acid chain; its full sequence is MVQFVTIPNLTDYQVTLKLMQNYVNKVINVNEPEIVYLVEHSEVYTAGTNYKQEELLNYSDIPVIYTGRGGKFTFHGPGQRVIYPILNLASPNRSKDLKLYIKMLEEWIINSLNYFGIKAYLIKDKVGIWVKVRKDEFAKIAAIGIRVRKWVTYHGVAINISTDLSKFGGIIPCGLENSLVTSLNQLGVHIEMSEFDKIIQTEFNKIFT.

Residues 30–209 (VNEPEIVYLV…IQTEFNKIFT (180 aa)) enclose the BPL/LPL catalytic domain. Substrate contacts are provided by residues 69 to 76 (RGGKFTFH), 143 to 145 (AIG), and 156 to 158 (GVA). Residue Cys174 is the Acyl-thioester intermediate of the active site.

This sequence belongs to the LipB family.

Its subcellular location is the cytoplasm. The enzyme catalyses octanoyl-[ACP] + L-lysyl-[protein] = N(6)-octanoyl-L-lysyl-[protein] + holo-[ACP] + H(+). It participates in protein modification; protein lipoylation via endogenous pathway; protein N(6)-(lipoyl)lysine from octanoyl-[acyl-carrier-protein]: step 1/2. In terms of biological role, catalyzes the transfer of endogenously produced octanoic acid from octanoyl-acyl-carrier-protein onto the lipoyl domains of lipoate-dependent enzymes. Lipoyl-ACP can also act as a substrate although octanoyl-ACP is likely to be the physiological substrate. The polypeptide is Octanoyltransferase (Rickettsia canadensis (strain McKiel)).